The following is a 354-amino-acid chain: Magnesium-protoporphyrin IX monomethyl ester [oxidative] cyclase 2 (354 aa).

The protein belongs to the AcsF family. Fe cation serves as cofactor.

The catalysed reaction is Mg-protoporphyrin IX 13-monomethyl ester + 3 NADPH + 3 O2 + 2 H(+) = 3,8-divinyl protochlorophyllide a + 3 NADP(+) + 5 H2O. The protein operates within porphyrin-containing compound metabolism; chlorophyll biosynthesis (light-independent). In terms of biological role, catalyzes the formation of the isocyclic ring in chlorophyll biosynthesis. Mediates the cyclase reaction, which results in the formation of divinylprotochlorophyllide (Pchlide) characteristic of all chlorophylls from magnesium-protoporphyrin IX 13-monomethyl ester (MgPMME). This is Magnesium-protoporphyrin IX monomethyl ester [oxidative] cyclase 2 from Thermosynechococcus vestitus (strain NIES-2133 / IAM M-273 / BP-1).